Reading from the N-terminus, the 381-residue chain is Queuine tRNA-ribosyltransferase (381 aa).

The Proton acceptor role is filled by D90. Residues 90 to 94 (DSGGF), D144, Q193, and G221 each bind substrate. The tract at residues 252–258 (GVGTPEN) is RNA binding. The active-site Nucleophile is D271. The tract at residues 276 to 280 (TRNAR) is RNA binding; important for wobble base 34 recognition. Zn(2+)-binding residues include C309, C311, C314, and H340.

This sequence belongs to the queuine tRNA-ribosyltransferase family. In terms of assembly, homodimer. Within each dimer, one monomer is responsible for RNA recognition and catalysis, while the other monomer binds to the replacement base PreQ1. Zn(2+) serves as cofactor.

The catalysed reaction is 7-aminomethyl-7-carbaguanine + guanosine(34) in tRNA = 7-aminomethyl-7-carbaguanosine(34) in tRNA + guanine. Its pathway is tRNA modification; tRNA-queuosine biosynthesis. Its function is as follows. Catalyzes the base-exchange of a guanine (G) residue with the queuine precursor 7-aminomethyl-7-deazaguanine (PreQ1) at position 34 (anticodon wobble position) in tRNAs with GU(N) anticodons (tRNA-Asp, -Asn, -His and -Tyr). Catalysis occurs through a double-displacement mechanism. The nucleophile active site attacks the C1' of nucleotide 34 to detach the guanine base from the RNA, forming a covalent enzyme-RNA intermediate. The proton acceptor active site deprotonates the incoming PreQ1, allowing a nucleophilic attack on the C1' of the ribose to form the product. After dissociation, two additional enzymatic reactions on the tRNA convert PreQ1 to queuine (Q), resulting in the hypermodified nucleoside queuosine (7-(((4,5-cis-dihydroxy-2-cyclopenten-1-yl)amino)methyl)-7-deazaguanosine). The protein is Queuine tRNA-ribosyltransferase of Helicobacter hepaticus (strain ATCC 51449 / 3B1).